The chain runs to 297 residues: MKHIINSYENINNTARNNSDCPRVVLPEEIFFTISIVGVLENLIVLLAVFKNKNLQAPMYFFICSLAISDMLGSLYKILENILIILRNMGYLKPRGSFETTADDIIDSLFVLSLLGSIFSLSVIAADRYITIFHALRYHSIVTMRRTVVVLTVIWTFCTGTGITMVIFSHHVPTVITFTSLFPLMLVFILCLYVHMFLLARSHTRKISTLPRANMKGAITLTILLGVFIFCWAPFVLHVLLMTFCPSNPYCACYMSLFQVNGMLIMCNAVIDPFIYAFRSPELRDAFKKMIFCSRYW.

The Extracellular segment spans residues 1-23; the sequence is MKHIINSYENINNTARNNSDCPR. 2 N-linked (GlcNAc...) asparagine glycosylation sites follow: Asn12 and Asn17. Disulfide bonds link Cys21–Cys253 and Cys245–Cys251. Residues 24–49 form a helical membrane-spanning segment; it reads VVLPEEIFFTISIVGVLENLIVLLAV. Residues 50-58 lie on the Cytoplasmic side of the membrane; sequence FKNKNLQAP. Residues 59-79 form a helical membrane-spanning segment; sequence MYFFICSLAISDMLGSLYKIL. Topologically, residues 80 to 104 are extracellular; the sequence is ENILIILRNMGYLKPRGSFETTADD. Residues 105-126 traverse the membrane as a helical segment; sequence IIDSLFVLSLLGSIFSLSVIAA. Over 127–147 the chain is Cytoplasmic; that stretch reads DRYITIFHALRYHSIVTMRRT. A helical membrane pass occupies residues 148 to 168; that stretch reads VVVLTVIWTFCTGTGITMVIF. Over 169–180 the chain is Extracellular; the sequence is SHHVPTVITFTS. A helical transmembrane segment spans residues 181–199; the sequence is LFPLMLVFILCLYVHMFLL. The Cytoplasmic portion of the chain corresponds to 200-217; it reads ARSHTRKISTLPRANMKG. Residues 218–244 traverse the membrane as a helical segment; the sequence is AITLTILLGVFIFCWAPFVLHVLLMTF. Residues 245-256 are Extracellular-facing; that stretch reads CPSNPYCACYMS. Residues 257-278 traverse the membrane as a helical segment; it reads LFQVNGMLIMCNAVIDPFIYAF. Residues 279 to 297 lie on the Cytoplasmic side of the membrane; the sequence is RSPELRDAFKKMIFCSRYW. A lipid anchor (S-palmitoyl cysteine) is attached at Cys293.

The protein belongs to the G-protein coupled receptor 1 family. Homodimer. Interacts with corticotropin (ACTH). Interacts with MRAP; this interaction targets MC2R to the plasma membrane. Interacts with MRAP2; competing with MRAP for binding to MC2R and impairing the binding of corticotropin (ACTH). Post-translationally, ubiquitinated by MGRN1 that may be involved in post-endocytic trafficking and/or degradation of internalized receptor. Melanocytes and corticoadrenal tissue.

The protein localises to the cell membrane. Its function is as follows. Hormone receptor primarily expressed in adrenal cortex that plays a key role in regulating adrenocortical function. Upon corticotropin (ACTH) binding, facilitates the release of adrenal glucocorticoids, including cortisol and corticosterone. In addition, MC2R is required for fetal and neonatal adrenal gland development. Mechanistically, activates adenylate cyclase (cAMP), the MAPK cascade as well as the cAMP-dependent protein kinase A pathway leading to steroidogenic factor 1/NR5A1-mediated transcriptional activation. This Homo sapiens (Human) protein is Adrenocorticotropic hormone receptor (MC2R).